Here is a 307-residue protein sequence, read N- to C-terminus: E3 ubiquitin-protein ligase PHF7 (307 aa).

The C2HC pre-PHD-type zinc-finger motif lies at 30–68; that stretch reads SPVCLLCLQEPGDPEKLGEFLQKDNLCVHYFCLILSSRL. Positions 33, 36, 58, and 61 each coordinate Zn(2+). A required for interaction and ubiquitination of the nucleosome core particle region spans residues 67–92; the sequence is RLPQKGQPNRGLHGFMPEDIKREAVR. The segment at 96–145 adopts a PHD-type zinc-finger fold; it reads KICFVCKKKGAAIRCQNDQCVQNFHLPCGQERGCLSQFFGEYKSYCRKHR. The Zn(2+) site is built by Cys98, Cys101, Cys110, Cys115, His120, Cys123, Cys141, His144, Cys160, Cys163, Cys179, Cys180, His186, Cys189, Cys204, Cys207, Cys248, Cys253, Cys273, Cys276, His282, Cys285, Cys297, and Cys300. Positions 150–307 are required for interaction with ubiquitinated UBE2D2; sequence IHQGSLGEES…NECLPASTTS (158 aa). Residues 160 to 208 form an RING-type; degenerate zinc finger; that stretch reads CVLCCENLSRTSVENIQSPCCSQAIYHRKCIQKYAHTSAKHFFKCPQCN. Residues 244-301 are required for association with and ubiquitination of H3; it reads RYRHCDAPICLYEQGRDSFEDEGRWRLILCATCGSHGTHRDCSSLRPNSKKWECNECL.

In terms of assembly, interacts with MEF2C; the interaction promotes MEF2C binding to its transcription targets. Interacts with GATA4; the interaction promotes GATA4 binding to its transcription targets. Interacts with UBE2D2; the interaction inhibits cleavage of PHF7 and promotes association of the complex with the nucleosome core particle. Expressed in Leydig cells and in developing spermatids (at protein level). Highly expressed in Sertoli cells in testis.

The protein resides in the nucleus. The catalysed reaction is S-ubiquitinyl-[E2 ubiquitin-conjugating enzyme]-L-cysteine + [acceptor protein]-L-lysine = [E2 ubiquitin-conjugating enzyme]-L-cysteine + N(6)-ubiquitinyl-[acceptor protein]-L-lysine.. It functions in the pathway protein modification; protein ubiquitination. Functionally, E3 ubiquitin-protein ligase which ubiquitinates histone H3 at 'Lys-14'. Required for male fertility, via inhibition of SPOP-mediated BRDT degradation when in the presence of acetylated histone H4 in early condensing spermatids. Stabilization of BRDT allows it to facilitate histone removal in early condensing spermatids and promote the progression of histone-to-protamine exchange. Promotes the expression of steroidogenesis proteins in the testes, and as a result plays a role in maintaining testosterone levels and repressing osteoclastogenesis. Promotes transcription of cardiac enhancer genes by facilitating binding of cardiac transcription factors such as MEF2C and GATA4 to target gene promoters. Ubiquitinates histone H4. Ubiquitinates histone H2A and H3 as part of the nucleosome core particle. The chain is E3 ubiquitin-protein ligase PHF7 from Mus musculus (Mouse).